A 154-amino-acid chain; its full sequence is UPF0225 protein YE2246 (154 aa).

The protein belongs to the UPF0225 family.

This is UPF0225 protein YE2246 from Yersinia enterocolitica serotype O:8 / biotype 1B (strain NCTC 13174 / 8081).